We begin with the raw amino-acid sequence, 669 residues long: UvrABC system protein B (669 aa).

In terms of domain architecture, Helicase ATP-binding spans 26 to 414 (TNFHAGIAKQ…AGEVIELLVR (389 aa)). 39–46 (GVTGSGKT) serves as a coordination point for ATP. The Beta-hairpin motif lies at 92-115 (YYDYYQPEAYVPASDTFIEKDSSI). The 163-residue stretch at 435-597 (LISQINVCIK…SVVRPISDIL (163 aa)) folds into the Helicase C-terminal domain. The region spanning 631–666 (AAQMKVLEQQMYQHARDLEFEDAARIRDQIQRLREA) is the UVR domain.

Belongs to the UvrB family. Forms a heterotetramer with UvrA during the search for lesions. Interacts with UvrC in an incision complex.

Its subcellular location is the cytoplasm. The UvrABC repair system catalyzes the recognition and processing of DNA lesions. A damage recognition complex composed of 2 UvrA and 2 UvrB subunits scans DNA for abnormalities. Upon binding of the UvrA(2)B(2) complex to a putative damaged site, the DNA wraps around one UvrB monomer. DNA wrap is dependent on ATP binding by UvrB and probably causes local melting of the DNA helix, facilitating insertion of UvrB beta-hairpin between the DNA strands. Then UvrB probes one DNA strand for the presence of a lesion. If a lesion is found the UvrA subunits dissociate and the UvrB-DNA preincision complex is formed. This complex is subsequently bound by UvrC and the second UvrB is released. If no lesion is found, the DNA wraps around the other UvrB subunit that will check the other stand for damage. This is UvrABC system protein B from Xylella fastidiosa (strain 9a5c).